The following is a 194-amino-acid chain: 3-isopropylmalate dehydratase small subunit (194 aa).

The protein belongs to the LeuD family. LeuD type 1 subfamily. In terms of assembly, heterodimer of LeuC and LeuD.

It catalyses the reaction (2R,3S)-3-isopropylmalate = (2S)-2-isopropylmalate. It participates in amino-acid biosynthesis; L-leucine biosynthesis; L-leucine from 3-methyl-2-oxobutanoate: step 2/4. Its function is as follows. Catalyzes the isomerization between 2-isopropylmalate and 3-isopropylmalate, via the formation of 2-isopropylmaleate. This is 3-isopropylmalate dehydratase small subunit from Anoxybacillus flavithermus (strain DSM 21510 / WK1).